A 287-amino-acid chain; its full sequence is Formamidopyrimidine-DNA glycosylase (287 aa).

Catalysis depends on proline 2, which acts as the Schiff-base intermediate with DNA. The active-site Proton donor is the glutamate 3. The active-site Proton donor; for beta-elimination activity is the lysine 58. 3 residues coordinate DNA: histidine 104, arginine 123, and arginine 166. The segment at 251 to 287 (RVYDREGEPCPTPACKGVIAREVQAGRSTFFCPVCQV) adopts an FPG-type zinc-finger fold. Arginine 277 acts as the Proton donor; for delta-elimination activity in catalysis.

It belongs to the FPG family. Monomer. It depends on Zn(2+) as a cofactor.

It catalyses the reaction Hydrolysis of DNA containing ring-opened 7-methylguanine residues, releasing 2,6-diamino-4-hydroxy-5-(N-methyl)formamidopyrimidine.. The catalysed reaction is 2'-deoxyribonucleotide-(2'-deoxyribose 5'-phosphate)-2'-deoxyribonucleotide-DNA = a 3'-end 2'-deoxyribonucleotide-(2,3-dehydro-2,3-deoxyribose 5'-phosphate)-DNA + a 5'-end 5'-phospho-2'-deoxyribonucleoside-DNA + H(+). In terms of biological role, involved in base excision repair of DNA damaged by oxidation or by mutagenic agents. Acts as a DNA glycosylase that recognizes and removes damaged bases. Has a preference for oxidized purines, such as 7,8-dihydro-8-oxoguanine (8-oxoG). Has AP (apurinic/apyrimidinic) lyase activity and introduces nicks in the DNA strand. Cleaves the DNA backbone by beta-delta elimination to generate a single-strand break at the site of the removed base with both 3'- and 5'-phosphates. This is Formamidopyrimidine-DNA glycosylase from Caulobacter vibrioides (strain ATCC 19089 / CIP 103742 / CB 15) (Caulobacter crescentus).